We begin with the raw amino-acid sequence, 230 residues long: 5'-methylthioadenosine/S-adenosylhomocysteine nucleosidase (230 aa).

The active-site Proton acceptor is Glu-12. Substrate is bound by residues Gly-78, Ile-153, and 174 to 175; that span reads ME. The active-site Proton donor is the Asp-198.

This sequence belongs to the PNP/UDP phosphorylase family. MtnN subfamily.

It catalyses the reaction S-adenosyl-L-homocysteine + H2O = S-(5-deoxy-D-ribos-5-yl)-L-homocysteine + adenine. It carries out the reaction S-methyl-5'-thioadenosine + H2O = 5-(methylsulfanyl)-D-ribose + adenine. The catalysed reaction is 5'-deoxyadenosine + H2O = 5-deoxy-D-ribose + adenine. It functions in the pathway amino-acid biosynthesis; L-methionine biosynthesis via salvage pathway; S-methyl-5-thio-alpha-D-ribose 1-phosphate from S-methyl-5'-thioadenosine (hydrolase route): step 1/2. Its function is as follows. Catalyzes the irreversible cleavage of the glycosidic bond in both 5'-methylthioadenosine (MTA) and S-adenosylhomocysteine (SAH/AdoHcy) to adenine and the corresponding thioribose, 5'-methylthioribose and S-ribosylhomocysteine, respectively. Also cleaves 5'-deoxyadenosine, a toxic by-product of radical S-adenosylmethionine (SAM) enzymes, into 5-deoxyribose and adenine. The protein is 5'-methylthioadenosine/S-adenosylhomocysteine nucleosidase of Shewanella sediminis (strain HAW-EB3).